The chain runs to 485 residues: Adenosylhomocysteinase (485 aa).

Positions 64, 139, and 205 each coordinate substrate. An NAD(+)-binding site is contributed by 206–208 (TTT). 2 residues coordinate substrate: Lys-235 and Asp-239. NAD(+) contacts are provided by residues Asn-240, 269–274 (GYGDVG), Glu-292, Asn-327, 348–350 (IGH), and Asn-397.

This sequence belongs to the adenosylhomocysteinase family. Homotetramer. Requires NAD(+) as cofactor.

It catalyses the reaction S-adenosyl-L-homocysteine + H2O = L-homocysteine + adenosine. It participates in amino-acid biosynthesis; L-homocysteine biosynthesis; L-homocysteine from S-adenosyl-L-homocysteine: step 1/1. Adenosylhomocysteine is a competitive inhibitor of S-adenosyl-L-methionine-dependent methyl transferase reactions; therefore adenosylhomocysteinase may play a key role in the control of methylations via regulation of the intracellular concentration of adenosylhomocysteine. This Catharanthus roseus (Madagascar periwinkle) protein is Adenosylhomocysteinase (SAHH).